A 317-amino-acid chain; its full sequence is Melanocyte-stimulating hormone receptor (317 aa).

The Extracellular segment spans residues 1 to 37; sequence MAVQGFQRRLLGSLNSTPTAIPQLGLAANQTGARCLE. Asn29 carries an N-linked (GlcNAc...) asparagine glycan. The chain crosses the membrane as a helical span at residues 38–63; the sequence is VSIPDGLFLSLGLVSLVENVLVVATI. Residues 64–72 lie on the Cytoplasmic side of the membrane; the sequence is AKNRNLHSP. The helical transmembrane segment at 73–93 threads the bilayer; it reads TYCFICCLALSDLLVSGGNVL. Over 94 to 118 the chain is Extracellular; the sequence is ETVVILLLEASALAARAAVVQPLDN. The helical transmembrane segment at 119–140 threads the bilayer; that stretch reads VIDVITCSSMVSSLCFLGAIAV. The Cytoplasmic portion of the chain corresponds to 141–163; it reads DRYVSIFYALRYHSIVTLPRARQ. A helical transmembrane segment spans residues 164–183; sequence AIAAIWVASVLFSTLFIAYY. Over 184–191 the chain is Extracellular; it reads DHAAVLLC. A helical transmembrane segment spans residues 192 to 211; sequence LVVFFLAMLVXMAVLYVHML. Residues 212–240 are Cytoplasmic-facing; sequence ARACQHAQGIARLHKRQRPLHQGFGLKGA. Residues 241–266 traverse the membrane as a helical segment; sequence VTLTILLGIFFLCWGPFFLHLTLIVL. Residues 267–279 lie on the Extracellular side of the membrane; the sequence is CPQHPTCSCIFKN. The chain crosses the membrane as a helical span at residues 280–300; it reads FNLFLTLIICNAIIDPLIYAF. Over 301–317 the chain is Cytoplasmic; sequence RRQELRRTLKEGLTCSW. The S-palmitoyl cysteine moiety is linked to residue Cys315.

The protein belongs to the G-protein coupled receptor 1 family. As to quaternary structure, interacts with MGRN1, but does not undergo MGRN1-mediated ubiquitination; this interaction competes with GNAS-binding and thus inhibits agonist-induced cAMP production. Interacts with OPN3; the interaction results in a decrease in MC1R-mediated cAMP signaling and ultimately a decrease in melanin production in melanocytes.

It is found in the cell membrane. Functionally, receptor for MSH (alpha, beta and gamma) and ACTH. The activity of this receptor is mediated by G proteins which activate adenylate cyclase. Mediates melanogenesis, the production of eumelanin (black/brown) and phaeomelanin (red/yellow), via regulation of cAMP signaling in melanocytes. The sequence is that of Melanocyte-stimulating hormone receptor (MC1R) from Hylobates muelleri (Mueller's Bornean gibbon).